Here is a 361-residue protein sequence, read N- to C-terminus: tRNA/tmRNA (uracil-C(5))-methyltransferase (361 aa).

The S-adenosyl-L-methionine site is built by Gln-183, Tyr-211, Asn-216, Glu-232, and Asp-294. The active-site Nucleophile is the Cys-319. Glu-353 acts as the Proton acceptor in catalysis.

Belongs to the class I-like SAM-binding methyltransferase superfamily. RNA M5U methyltransferase family. TrmA subfamily.

It carries out the reaction uridine(54) in tRNA + S-adenosyl-L-methionine = 5-methyluridine(54) in tRNA + S-adenosyl-L-homocysteine + H(+). It catalyses the reaction uridine(341) in tmRNA + S-adenosyl-L-methionine = 5-methyluridine(341) in tmRNA + S-adenosyl-L-homocysteine + H(+). Functionally, dual-specificity methyltransferase that catalyzes the formation of 5-methyluridine at position 54 (m5U54) in all tRNAs, and that of position 341 (m5U341) in tmRNA (transfer-mRNA). The chain is tRNA/tmRNA (uracil-C(5))-methyltransferase from Acinetobacter baumannii (strain AB307-0294).